A 110-amino-acid chain; its full sequence is Phosphoribosyl-AMP cyclohydrolase (110 aa).

D80 serves as a coordination point for Mg(2+). Zn(2+) is bound at residue C81. Positions 82 and 84 each coordinate Mg(2+). 2 residues coordinate Zn(2+): C97 and C104.

Belongs to the PRA-CH family. As to quaternary structure, homodimer. Mg(2+) is required as a cofactor. Zn(2+) serves as cofactor.

The protein localises to the cytoplasm. It catalyses the reaction 1-(5-phospho-beta-D-ribosyl)-5'-AMP + H2O = 1-(5-phospho-beta-D-ribosyl)-5-[(5-phospho-beta-D-ribosylamino)methylideneamino]imidazole-4-carboxamide. It functions in the pathway amino-acid biosynthesis; L-histidine biosynthesis; L-histidine from 5-phospho-alpha-D-ribose 1-diphosphate: step 3/9. In terms of biological role, catalyzes the hydrolysis of the adenine ring of phosphoribosyl-AMP. This is Phosphoribosyl-AMP cyclohydrolase from Clostridium botulinum (strain 657 / Type Ba4).